The sequence spans 216 residues: Ras-related protein RABE1d (216 aa).

Residue Gly22–Ser29 participates in GTP binding. The short motif at Phe44–Phe52 is the Effector region element. GTP contacts are provided by residues Asp70 to Gln74, Asn128 to Asp131, and Ser159 to Ala160. The tract at residues Thr196–Val216 is disordered. Low complexity predominate over residues Thr200 to Val216. S-geranylgeranyl cysteine attachment occurs at residues Cys212 and Cys213.

This sequence belongs to the small GTPase superfamily. Rab family. In terms of assembly, interacts with PI5K2.

The protein localises to the golgi apparatus membrane. Its subcellular location is the cell membrane. Functionally, involved in membrane trafficking from the Golgi to the plasma membrane. This Arabidopsis thaliana (Mouse-ear cress) protein is Ras-related protein RABE1d (RABE1D).